The chain runs to 336 residues: Adenosine deaminase (336 aa).

His15 and His17 together coordinate Zn(2+). Substrate-binding residues include His17, Asp19, and Gly172. Position 199 (His199) interacts with Zn(2+). Glu202 functions as the Proton donor in the catalytic mechanism. Zn(2+) is bound at residue Asp279.

This sequence belongs to the metallo-dependent hydrolases superfamily. Adenosine and AMP deaminases family. Adenosine deaminase subfamily. Zn(2+) serves as cofactor.

It catalyses the reaction adenosine + H2O + H(+) = inosine + NH4(+). It carries out the reaction 2'-deoxyadenosine + H2O + H(+) = 2'-deoxyinosine + NH4(+). Functionally, catalyzes the hydrolytic deamination of adenosine and 2-deoxyadenosine. The chain is Adenosine deaminase from Streptococcus thermophilus (strain ATCC BAA-491 / LMD-9).